Consider the following 351-residue polypeptide: Peptide chain release factor 1 (351 aa).

Gln229 is subject to N5-methylglutamine. Positions 279–300 (ADAERAADRKSQVGSGDRSERI) are disordered.

This sequence belongs to the prokaryotic/mitochondrial release factor family. In terms of processing, methylated by PrmC. Methylation increases the termination efficiency of RF1.

The protein resides in the cytoplasm. In terms of biological role, peptide chain release factor 1 directs the termination of translation in response to the peptide chain termination codons UAG and UAA. This is Peptide chain release factor 1 from Paracoccus denitrificans (strain Pd 1222).